A 385-amino-acid polypeptide reads, in one-letter code: MVGISGRAGPSGSYNYSGHTDNPEPVSGRARDSNSEANSSNSPQVPPPLNAPASPMPAGRPRFLRSMALSSQTREWLEKGMPTEAEAGVPIRLQERAANTAPQARAEERHTQPADAAAPHARAERGRTLQAPASTSPLYTGAVPRANRIVQQLVEAGADLANIRTMFRNMLRGEEMILSRAEQNVFLQHFPDMLPCGIDRNSELAIALREALRRADSQQAARAPARTPPRSSVRTPERSPAPRTATESSSGSNQRSLLGRFAGLMTSNQRRPSSASNASTSQRPVDRNPPRINLMPTGANRVAMRNRGNNEADAALQALAQNGINMEDLRAALEAYIVWLRPIPLDIANALEGVGITPRFDNPEEAKVDNPLMNLSSALKRRLDA.

Disordered regions lie at residues 1-61 (MVGI…AGRP), 73-139 (TREW…SPLY), and 215-293 (ADSQ…PRIN). Positions 1 to 333 (MVGISGRAGP…INMEDLRAAL (333 aa)) are host recognition. Over residues 217–234 (SQQAARAPARTPPRSSVR) the composition is skewed to low complexity. Polar residues-rich tracts occupy residues 245–256 (ATESSSGSNQRS) and 265–283 (MTSN…TSQR).

Belongs to the HopAB family. As to quaternary structure, interacts physically with plant cell Pto.

It is found in the secreted. Functionally, effector protein involved in gene-for-gene resistance in tomato plants. It is recognized by the host Pto resistance protein and elicits Pto and Prf-dependent hypersensitive response (HR) and programmed cell death (PCD), resulting in host immunity. In susceptible plants, promotes virulence, in part, by enhancing the development of disease symptoms and bacterial growth. The sequence is that of Effector protein hopAB3 (hopAB3) from Pseudomonas syringae pv. maculicola.